The sequence spans 179 residues: UPF0134 protein MPN_145 (179 aa).

The protein belongs to the UPF0134 family.

In Mycoplasma pneumoniae (strain ATCC 29342 / M129 / Subtype 1) (Mycoplasmoides pneumoniae), this protein is UPF0134 protein MPN_145.